A 64-amino-acid polypeptide reads, in one-letter code: Large ribosomal subunit protein bL32 (64 aa).

It belongs to the bacterial ribosomal protein bL32 family.

The sequence is that of Large ribosomal subunit protein bL32 from Mycoplasma mobile (strain ATCC 43663 / 163K / NCTC 11711) (Mesomycoplasma mobile).